The following is a 660-amino-acid chain: Polyadenylation factor subunit 2 (660 aa).

A compositionally biased stretch (basic and acidic residues) spans 1–12 (MSYEPRGDHDKG). Positions 1-32 (MSYEPRGDHDKGYGGGGGHDGLPPRNRGRRPV) are disordered. 7 WD repeats span residues 94-133 (KIKH…FETI), 136-176 (AHDS…ESIR), 177-216 (GHTD…TDMT), 219-258 (GHGW…CLTT), 261-301 (GHKN…DIAL), 304-344 (GHEK…TAPD), and 376-415 (AHDF…EAPE). The interval 562–660 (KAGYQPPPPP…QSKGNYTRVR (99 aa)) is disordered. The span at 566 to 610 (QPPPPPGSAGAPMPPPGILPPGLIPPPGAAGFPMPPPGFAPPPLI) shows a compositional bias: pro residues.

The protein resides in the nucleus. Functionally, required for 3'-end cleavage and polyadenylation of pre-mRNAs. Also involved in chromosome segregation where it has a role in chromosome attachment to the mitotic spindle. The polypeptide is Polyadenylation factor subunit 2 (paa-1) (Neurospora crassa (strain ATCC 24698 / 74-OR23-1A / CBS 708.71 / DSM 1257 / FGSC 987)).